A 755-amino-acid polypeptide reads, in one-letter code: Cellulose synthase-like protein B4 (755 aa).

Helical transmembrane passes span 24 to 44 (AVDLTILGLLLSLLLYRILHV) and 49 to 69 (TVWIVAFLCETCFTFVWLLIT). Residues Asp136 and Asp461 contribute to the active site. 6 consecutive transmembrane segments (helical) span residues 533–556 (AYLYVFSWGLRSIPELFYCLLPAY), 569–589 (VYLGIIITLVGIHCLYTLWEF), 615–635 (LFSVLDVILKLLGISKTVFIV), 674–694 (FLPGTFIVLVNLAALAGCLVG), 702–722 (GSGLAEACGCILVVILFLPFL), and 733–753 (IPFSTLSKAAFLAALFVVLSV).

Belongs to the glycosyltransferase 2 family. Plant cellulose synthase-like B subfamily.

It localises to the golgi apparatus membrane. Its function is as follows. Thought to be a Golgi-localized beta-glycan synthase that polymerize the backbones of noncellulosic polysaccharides (hemicelluloses) of plant cell wall. The polypeptide is Cellulose synthase-like protein B4 (CSLB4) (Arabidopsis thaliana (Mouse-ear cress)).